We begin with the raw amino-acid sequence, 359 residues long: Stearoyl-CoA desaturase (359 aa).

Residues 1-72 are Cytoplasmic-facing; sequence MPAHLLQEEI…EGPRPKLEYV (72 aa). The chain crosses the membrane as a helical span at residues 73 to 93; that stretch reads WRNIILMSLLHLGALYGIILI. Asn75 provides a ligand contact to substrate. The Lumenal portion of the chain corresponds to 94 to 97; that stretch reads PTCK. The helical transmembrane segment at 98–118 threads the bilayer; sequence IYTLLWAFAYYLLSAVGVTAG. Topologically, residues 119 to 217 are cytoplasmic; the sequence is AHRLWSHRTY…EKLVMFQRRY (99 aa). Fe cation-binding residues include His120 and His125. The short motif at 120-125 is the Histidine box-1 element; sequence HRLWSH. Positions 148, 155, and 156 each coordinate substrate. Fe cation-binding residues include His157, His160, and His161. The Histidine box-2 motif lies at 157–161; that stretch reads HRAHH. Residues Arg188 and Lys189 each contribute to the substrate site. At Ser203 the chain carries Phosphoserine. Residues 218–237 form a helical membrane-spanning segment; the sequence is YKPGILLMCFILPTIVPWYC. The Lumenal portion of the chain corresponds to 238-241; it reads WGEA. The helical transmembrane segment at 242–263 threads the bilayer; the sequence is FPQSLFVATFLRYAIVLNATWL. Trp262 lines the substrate pocket. Residues 264-359 lie on the Cytoplasmic side of the membrane; that stretch reads VNSAAHLYGY…RTGDESYKSG (96 aa). The Fe cation site is built by His269, His298, His301, and His302. The short motif at 298–302 is the Histidine box-3 element; the sequence is HNYHH.

The protein belongs to the fatty acid desaturase type 1 family. Requires Fe(2+) as cofactor.

The protein localises to the endoplasmic reticulum membrane. It carries out the reaction octadecanoyl-CoA + 2 Fe(II)-[cytochrome b5] + O2 + 2 H(+) = (9Z)-octadecenoyl-CoA + 2 Fe(III)-[cytochrome b5] + 2 H2O. It catalyses the reaction hexadecanoyl-CoA + 2 Fe(II)-[cytochrome b5] + O2 + 2 H(+) = (9Z)-hexadecenoyl-CoA + 2 Fe(III)-[cytochrome b5] + 2 H2O. Its function is as follows. Stearoyl-CoA desaturase that utilizes O(2) and electrons from reduced cytochrome b5 to introduce the first double bond into saturated fatty acyl-CoA substrates. Catalyzes the insertion of a cis double bond at the delta-9 position into fatty acyl-CoA substrates including palmitoyl-CoA and stearoyl-CoA. Gives rise to a mixture of 16:1 and 18:1 unsaturated fatty acids. Plays an important role in lipid biosynthesis. Plays an important role in regulating the expression of genes that are involved in lipogenesis and in regulating mitochondrial fatty acid oxidation. Plays an important role in body energy homeostasis. Contributes to the biosynthesis of membrane phospholipids, cholesterol esters and triglycerides. The sequence is that of Stearoyl-CoA desaturase (SCD) from Sus scrofa (Pig).